We begin with the raw amino-acid sequence, 117 residues long: Protein YchN (117 aa).

It to M.jannaschii MJ0989. Homohexamer. The hexamer is formed by a dimer of trimers.

This chain is Protein YchN (ychN), found in Escherichia coli O157:H7.